Here is a 385-residue protein sequence, read N- to C-terminus: Zinc finger protein B385R (385 aa).

2 consecutive C2H2-type zinc fingers follow at residues 166-190 and 168-190; these read LQCP…FYNH and CPNC…FYNH.

It belongs to the asfivirus B385R family.

The sequence is that of Zinc finger protein B385R from African swine fever virus (isolate Tick/South Africa/Pretoriuskop Pr4/1996) (ASFV).